The following is a 500-amino-acid chain: tRNA (guanine(37)-N(1))-methyltransferase (500 aa).

S-adenosyl-L-methionine-binding positions include His215, 253–254 (DL), 281–282 (DA), and Asn312. A disordered region spans residues 463 to 500 (QIVAKKTPKPAPRPLPAKNKTTPDTNKMETDLTKLEMK). A compositionally biased stretch (basic and acidic residues) spans 488-500 (NKMETDLTKLEMK).

The protein belongs to the class I-like SAM-binding methyltransferase superfamily. TRM5/TYW2 family. Monomer.

The protein localises to the mitochondrion matrix. It localises to the nucleus. It is found in the cytoplasm. It carries out the reaction guanosine(37) in tRNA + S-adenosyl-L-methionine = N(1)-methylguanosine(37) in tRNA + S-adenosyl-L-homocysteine + H(+). Functionally, specifically methylates the N1 position of guanosine-37 in various cytoplasmic and mitochondrial tRNAs. Methylation is not dependent on the nature of the nucleoside 5' of the target nucleoside. This is the first step in the biosynthesis of wybutosine (yW), a modified base adjacent to the anticodon of tRNAs and required for accurate decoding. This is tRNA (guanine(37)-N(1))-methyltransferase from Anopheles darlingi (Mosquito).